The following is a 123-amino-acid chain: UPF0738 protein BcerKBAB4_1107 (123 aa).

Belongs to the UPF0738 family.

The polypeptide is UPF0738 protein BcerKBAB4_1107 (Bacillus mycoides (strain KBAB4) (Bacillus weihenstephanensis)).